A 421-amino-acid chain; its full sequence is C4-dicarboxylate transport protein (421 aa).

Transmembrane regions (helical) follow at residues 9–29 (VQVI…PDVG), 39–59 (FINA…VLGI), 76–96 (FIYF…VVNI), 145–165 (GDIL…AALG), 185–205 (IIGY…AYTI), 219–239 (LMMS…NIIC), 316–336 (VFGV…LMLT), and 348–368 (FIVL…GLAL).

The protein belongs to the dicarboxylate/amino acid:cation symporter (DAACS) (TC 2.A.23) family.

It localises to the cell membrane. Responsible for the transport of succinate and fumarate, but not malate, across the membrane. In Bacillus subtilis (strain 168), this protein is C4-dicarboxylate transport protein (dctA).